Consider the following 457-residue polypeptide: Serine--tRNA ligase (457 aa).

Position 252-254 (252-254 (TAE)) interacts with L-serine. ATP is bound by residues 283 to 285 (RKE) and Val-299. L-serine is bound at residue Glu-306. 370–373 (EVVS) lines the ATP pocket. An L-serine-binding site is contributed by Thr-406.

The protein belongs to the class-II aminoacyl-tRNA synthetase family. Type-1 seryl-tRNA synthetase subfamily. Homodimer. The tRNA molecule binds across the dimer.

The protein localises to the cytoplasm. It carries out the reaction tRNA(Ser) + L-serine + ATP = L-seryl-tRNA(Ser) + AMP + diphosphate + H(+). It catalyses the reaction tRNA(Sec) + L-serine + ATP = L-seryl-tRNA(Sec) + AMP + diphosphate + H(+). Its pathway is aminoacyl-tRNA biosynthesis; selenocysteinyl-tRNA(Sec) biosynthesis; L-seryl-tRNA(Sec) from L-serine and tRNA(Sec): step 1/1. Functionally, catalyzes the attachment of serine to tRNA(Ser). Is also able to aminoacylate tRNA(Sec) with serine, to form the misacylated tRNA L-seryl-tRNA(Sec), which will be further converted into selenocysteinyl-tRNA(Sec). The polypeptide is Serine--tRNA ligase (Thermococcus onnurineus (strain NA1)).